A 206-amino-acid chain; its full sequence is Dephospho-CoA kinase (206 aa).

Residues 4–204 (VIGLTGGIAS…EGYIESHSED (201 aa)) form the DPCK domain. Position 12–17 (12–17 (ASGKST)) interacts with ATP.

Belongs to the CoaE family.

It is found in the cytoplasm. It catalyses the reaction 3'-dephospho-CoA + ATP = ADP + CoA + H(+). Its pathway is cofactor biosynthesis; coenzyme A biosynthesis; CoA from (R)-pantothenate: step 5/5. Its function is as follows. Catalyzes the phosphorylation of the 3'-hydroxyl group of dephosphocoenzyme A to form coenzyme A. The protein is Dephospho-CoA kinase of Staphylococcus saprophyticus subsp. saprophyticus (strain ATCC 15305 / DSM 20229 / NCIMB 8711 / NCTC 7292 / S-41).